The chain runs to 311 residues: 4-hydroxy-tetrahydrodipicolinate synthase (311 aa).

Pyruvate is bound at residue threonine 49. The active-site Proton donor/acceptor is tyrosine 138. Lysine 166 functions as the Schiff-base intermediate with substrate in the catalytic mechanism. Position 207 (valine 207) interacts with pyruvate.

The protein belongs to the DapA family. Homotetramer; dimer of dimers.

The protein localises to the cytoplasm. It catalyses the reaction L-aspartate 4-semialdehyde + pyruvate = (2S,4S)-4-hydroxy-2,3,4,5-tetrahydrodipicolinate + H2O + H(+). Its pathway is amino-acid biosynthesis; L-lysine biosynthesis via DAP pathway; (S)-tetrahydrodipicolinate from L-aspartate: step 3/4. Its function is as follows. Catalyzes the condensation of (S)-aspartate-beta-semialdehyde [(S)-ASA] and pyruvate to 4-hydroxy-tetrahydrodipicolinate (HTPA). The chain is 4-hydroxy-tetrahydrodipicolinate synthase from Lactobacillus helveticus (strain DPC 4571).